The primary structure comprises 90 residues: U7-theraphotoxin-Hhn1e (90 aa).

The N-terminal stretch at 1–19 (MKTAIFTVVLALAVFAVLS) is a signal peptide. The propeptide occupies 20-50 (FGWEANEKALSEEFTELIHEKEAASETEARE). Cystine bridges form between Cys-51-Cys-65, Cys-58-Cys-70, and Cys-64-Cys-81.

Belongs to the neurotoxin 10 (Hwtx-1) family. 13 (Hntx-13) subfamily. Expressed by the venom gland.

Its subcellular location is the secreted. Ion channel inhibitor. The polypeptide is U7-theraphotoxin-Hhn1e (Cyriopagopus hainanus (Chinese bird spider)).